The sequence spans 81 residues: Escargot/snail protein homolog (81 aa).

C2H2-type zinc fingers lie at residues 1-5 (HQQFH), 17-39 (FSCKYCEKVYVSLGALKMHIRTH), 43-65 (CKCHLCGKAFSRPWLLQGHIRTH), and 71-81 (FSCQHCNRAFA).

The protein belongs to the snail C2H2-type zinc-finger protein family.

The protein localises to the nucleus. This Apis mellifera (Honeybee) protein is Escargot/snail protein homolog.